A 510-amino-acid chain; its full sequence is MQLNSTEISQLIKERIAQFEVFNQSYNEGTIISVNDGIIKIYGLSDVMLGEMILLPDNEYAIALNIERDTIGAVVMGPYIHITEGTKVRCTGKILEVPVGVALLGRIVNALGFPIDGKGSIEHDIYLPVEADAPGVIERESINEPIQTGYKAIDAMVPIGRGQRELIIGDRQTGKTALAIDTIINQKKINLPCVYVAIGQKLSTIINVVKKLDEHDALLNTIVVVASASEAASLQYLAPYSGCAMGEYFRDRGKDALIVYDDLSKHAVAYRQISLLLRRPPGREAFPGDVFYLHSRLLERASRVSKEHVKNVTKGKITGKTGSLTALPIIETQSGDVSAFVPTNVISITDGQIFLESNLFNSGIRPAVNAGISVSRVGSAAQTKIIKKLSSGIRTALAQYHELAAFSQFASDLDQTTRKQLIYGQKITELLKQKQYRPMSISEQGLMFFIAENNFLDDISVENIIQFEKEILTYAYNYHLDLMEEINKDGNFNDIIKKKFIELINNFKNS.

Gly-169–Thr-176 is an ATP binding site.

Belongs to the ATPase alpha/beta chains family. F-type ATPases have 2 components, CF(1) - the catalytic core - and CF(0) - the membrane proton channel. CF(1) has five subunits: alpha(3), beta(3), gamma(1), delta(1), epsilon(1). CF(0) has three main subunits: a(1), b(2) and c(9-12). The alpha and beta chains form an alternating ring which encloses part of the gamma chain. CF(1) is attached to CF(0) by a central stalk formed by the gamma and epsilon chains, while a peripheral stalk is formed by the delta and b chains.

The protein resides in the cell membrane. The catalysed reaction is ATP + H2O + 4 H(+)(in) = ADP + phosphate + 5 H(+)(out). Produces ATP from ADP in the presence of a proton gradient across the membrane. The alpha chain is a regulatory subunit. This Buchnera aphidicola subsp. Schizaphis graminum (strain Sg) protein is ATP synthase subunit alpha.